Reading from the N-terminus, the 903-residue chain is Centrobin (903 aa).

Over residues M1 to S10 the composition is skewed to polar residues. The disordered stretch occupies residues M1–V34. At S80 the chain carries Phosphoserine. Disordered regions lie at residues L110–S140, L471–Q493, L568–R597, S669–A704, R772–T799, and S837–R903. The stretch at R196 to H560 forms a coiled coil. Residues Q365–R903 are required for centrosome localization. The segment covering L572 to Q590 has biased composition (pro residues). A compositionally biased stretch (basic and acidic residues) spans H675–P685. A compositionally biased stretch (low complexity) spans S778–P791. S790 is subject to Phosphoserine. Residues S837–I863 are compositionally biased toward basic and acidic residues.

In terms of assembly, interacts with LYST. Widely expressed (at protein level). Highly expressed in testis. Also expressed in spleen, thymus, prostate, small intestine, colon and peripheral blood leukocytes.

It localises to the cytoplasm. The protein localises to the cytoskeleton. The protein resides in the microtubule organizing center. It is found in the centrosome. Its subcellular location is the centriole. Functionally, required for centriole duplication. Inhibition of centriole duplication leading to defects in cytokinesis. This chain is Centrobin (CNTROB), found in Homo sapiens (Human).